We begin with the raw amino-acid sequence, 1214 residues long: Filamin-A-interacting protein 1 (1214 aa).

The segment covering 1–15 (MRSRNQGGESSSNGH) has biased composition (polar residues). The tract at residues 1–73 (MRSRNQGGES…ESEKKTKKPL (73 aa)) is disordered. 2 stretches are compositionally biased toward basic and acidic residues: residues 32–47 (PSED…KGED) and 61–73 (PSGE…KKPL). Position 138 is a phosphoserine (S138). 2 coiled-coil regions span residues 192-581 (DYMN…KLRS) and 624-778 (PEDN…ELEL). Disordered stretches follow at residues 875–898 (KREN…GHPG) and 949–976 (KPRI…GPER). S979 carries the post-translational modification Phosphoserine. The tract at residues 1104–1192 (VSTGTVLRSP…TKFQPRAETQ (89 aa)) is disordered. Residues 1126–1140 (VTSTITITPVTTSST) show a composition bias toward low complexity. The span at 1141–1157 (RGTQSVSGQDGSSQRPT) shows a compositional bias: polar residues. The span at 1169-1180 (AGKPVVAAPGAG) shows a compositional bias: low complexity.

Belongs to the FILIP1 family. As to quaternary structure, interacts with FLNA. Interacts with RHOD (in GTP-bound form).

Its subcellular location is the cytoplasm. It localises to the cytoskeleton. Its function is as follows. By acting through a filamin-A/F-actin axis, it controls the start of neocortical cell migration from the ventricular zone. May be able to induce the degradation of filamin-A. The protein is Filamin-A-interacting protein 1 (Filip1) of Mus musculus (Mouse).